A 182-amino-acid chain; its full sequence is Troponin I, fast skeletal muscle (182 aa).

N-acetylglycine is present on glycine 2. Residues 2–48 (GDEEKRNRAITARRQHLKSVMLQIAATELEKEESRRESEKQNYLSEH) form an involved in binding TNC region. Residue threonine 12 is modified to Phosphothreonine. Basic and acidic residues predominate over residues 29 to 41 (ELEKEESRRESEK). The interval 29–53 (ELEKEESRRESEKQNYLSEHCPPLH) is disordered. Positions 97 to 117 (NQKLFDLRGKFKRPPLRRVRM) are involved in binding TNC and actin. Phosphoserine is present on serine 118.

This sequence belongs to the troponin I family. In terms of assembly, binds to actin and tropomyosin.

Functionally, troponin I is the inhibitory subunit of troponin, the thin filament regulatory complex which confers calcium-sensitivity to striated muscle actomyosin ATPase activity. The sequence is that of Troponin I, fast skeletal muscle (Tnni2) from Rattus norvegicus (Rat).